Reading from the N-terminus, the 359-residue chain is MSKEKALESALSQIEKQFGKGAIMRLGDQEAAHDIDVIPSGIIALDVALGIGGYPKGRIIEIYGHESSGKTTLTLLAIAQCQKQGGTAAFVDAEHALDPKYAKLLGVDVDNLIVSQPDTGEQALEIADMLVRSGGVDIVVIDSVAALTPKAEIEGDMGDSHMGLQARLMSQALRKLTANIKRSNTLVIFINQIRMKIGVMFGNPETTTGGNALKFYSSVRLEVKKGGSIKDGIDVSGNEIKVKVVKNKVAPPFKQADFELIYGEGISLEAELIDLGAKYNIIEKSGAWYSYKGKKIGQGKEKSKEYLKENTAERDEIERAILELLLPNKYSNKDSNDSPKEGSKIKTKVNPAVTQDELI.

Position 64-71 (64-71 (GHESSGKT)) interacts with ATP. Positions 329–359 (KYSNKDSNDSPKEGSKIKTKVNPAVTQDELI) are disordered. Positions 331-344 (SNKDSNDSPKEGSK) are enriched in basic and acidic residues.

This sequence belongs to the RecA family.

It localises to the cytoplasm. In terms of biological role, can catalyze the hydrolysis of ATP in the presence of single-stranded DNA, the ATP-dependent uptake of single-stranded DNA by duplex DNA, and the ATP-dependent hybridization of homologous single-stranded DNAs. It interacts with LexA causing its activation and leading to its autocatalytic cleavage. This chain is Protein RecA, found in Francisella tularensis subsp. tularensis (strain FSC 198).